Here is a 382-residue protein sequence, read N- to C-terminus: Lipid-A-disaccharide synthase (382 aa).

The protein belongs to the LpxB family.

The catalysed reaction is 2-N,3-O-bis[(3R)-3-hydroxytetradecanoyl]-alpha-D-glucosaminyl 1-phosphate + UDP-2-N,3-O-bis[(3R)-3-hydroxytetradecanoyl]-alpha-D-glucosamine = lipid A disaccharide (E. coli) + UDP + H(+). It carries out the reaction a lipid X + a UDP-2-N,3-O-bis[(3R)-3-hydroxyacyl]-alpha-D-glucosamine = a lipid A disaccharide + UDP + H(+). It participates in glycolipid biosynthesis; lipid IV(A) biosynthesis; lipid IV(A) from (3R)-3-hydroxytetradecanoyl-[acyl-carrier-protein] and UDP-N-acetyl-alpha-D-glucosamine: step 5/6. In terms of biological role, condensation of UDP-2,3-diacylglucosamine and 2,3-diacylglucosamine-1-phosphate to form lipid A disaccharide, a precursor of lipid A, a phosphorylated glycolipid that anchors the lipopolysaccharide to the outer membrane of the cell. The sequence is that of Lipid-A-disaccharide synthase from Escherichia fergusonii (strain ATCC 35469 / DSM 13698 / CCUG 18766 / IAM 14443 / JCM 21226 / LMG 7866 / NBRC 102419 / NCTC 12128 / CDC 0568-73).